The sequence spans 258 residues: Phosphoribosylaminoimidazole-succinocarboxamide synthase (258 aa).

Belongs to the SAICAR synthetase family.

It catalyses the reaction 5-amino-1-(5-phospho-D-ribosyl)imidazole-4-carboxylate + L-aspartate + ATP = (2S)-2-[5-amino-1-(5-phospho-beta-D-ribosyl)imidazole-4-carboxamido]succinate + ADP + phosphate + 2 H(+). It participates in purine metabolism; IMP biosynthesis via de novo pathway; 5-amino-1-(5-phospho-D-ribosyl)imidazole-4-carboxamide from 5-amino-1-(5-phospho-D-ribosyl)imidazole-4-carboxylate: step 1/2. In Sphingopyxis alaskensis (strain DSM 13593 / LMG 18877 / RB2256) (Sphingomonas alaskensis), this protein is Phosphoribosylaminoimidazole-succinocarboxamide synthase.